Here is a 504-residue protein sequence, read N- to C-terminus: ADP,ATP carrier protein 3 (504 aa).

The next 12 membrane-spanning stretches (helical) occupy residues 23–43 (LKLFIPMALMMLCILFNFGAL), 59–79 (IISFLKLWLVLPACVIFTILY), 90–110 (YVFYIIVGSFLLFFLFFAYII), 146–166 (YGLMYIFAELWSAVVINLMFW), 183–203 (PVLGMVGNIGLILAGSVLVFF), 230–250 (EMLQPIMSIIVAAGVISMLLF), 296–316 (IALLIICYGLLINIVEGPWKA), 329–349 (VHFMGRFNILMGISCVTFMII), 364–384 (LLTPIMLSITGLMFFIFIIFI), 386–406 (EIGSCFGNFNLLYAAIIVGAI), 449–469 (FGKSLGAFIQSLIFIIIPTAT), and 473–493 (IIIYLLVIFIVMISLWIWDVV).

The protein belongs to the ADP/ATP translocase tlc family.

Its subcellular location is the cell membrane. Its function is as follows. Provides the rickettsial cell with host ATP in exchange for rickettsial ADP. This is an obligate exchange system. This energy acquiring activity is an important component of rickettsial parasitism. The polypeptide is ADP,ATP carrier protein 3 (tlcC) (Rickettsia bellii (strain RML369-C)).